A 570-amino-acid polypeptide reads, in one-letter code: Sorting nexin-41 (570 aa).

Disordered regions lie at residues 1-31 (MSDF…PSAS) and 81-115 (FDDG…TTAS). The segment covering 84–101 (GSNSFSATPTASITNQND) has biased composition (polar residues). The region spanning 98 to 236 (NQNDTAHEAT…RFLDPHASWS (139 aa)) is the PX domain. A 1,2-diacyl-sn-glycero-3-phospho-(1D-myo-inositol-3-phosphate) is bound by residues R153, S155, K179, and R202. Positions 429–498 (DSQRINDALG…ASRRQGIGKT (70 aa)) are disordered. Polar residues predominate over residues 440-454 (TRSNNGPSTTNSGEQ). A compositionally biased stretch (low complexity) spans 455–464 (PSASPAPKKS).

Belongs to the sorting nexin family.

Its subcellular location is the endosome membrane. The protein resides in the endomembrane system. Functionally, may be required for cytoplasm to vacuole transport (Cvt) and pexophagy. In Yarrowia lipolytica (strain CLIB 122 / E 150) (Yeast), this protein is Sorting nexin-41 (SNX41).